A 105-amino-acid polypeptide reads, in one-letter code: Thiosulfate sulfurtransferase GlpE (105 aa).

The region spanning 15–103 is the Rhodanese domain; sequence MQQGAILVDI…WCRAELPIDT (89 aa). C63 serves as the catalytic Cysteine persulfide intermediate.

It belongs to the GlpE family.

It is found in the cytoplasm. It carries out the reaction thiosulfate + hydrogen cyanide = thiocyanate + sulfite + 2 H(+). The enzyme catalyses thiosulfate + [thioredoxin]-dithiol = [thioredoxin]-disulfide + hydrogen sulfide + sulfite + 2 H(+). Transferase that catalyzes the transfer of sulfur from thiosulfate to thiophilic acceptors such as cyanide or dithiols. May function in a CysM-independent thiosulfate assimilation pathway by catalyzing the conversion of thiosulfate to sulfite, which can then be used for L-cysteine biosynthesis. This Haemophilus influenzae (strain PittEE) protein is Thiosulfate sulfurtransferase GlpE.